The following is a 253-amino-acid chain: AA9 family lytic polysaccharide monooxygenase F (253 aa).

The signal sequence occupies residues 1 to 16 (MKVLATLLASVGLVAA). Residue H17 coordinates Cu(2+). N22 is a glycosylation site (N-linked (GlcNAc...) asparagine). Disulfide bonds link C75/C193 and C163/C253. H105 contacts Cu(2+). The N-linked (GlcNAc...) asparagine glycan is linked to N143. O2 is bound by residues H179 and Q188. Y190 contributes to the Cu(2+) binding site.

Belongs to the polysaccharide monooxygenase AA9 family. Cu(2+) is required as a cofactor.

The protein localises to the secreted. The enzyme catalyses [(1-&gt;4)-beta-D-glucosyl]n+m + reduced acceptor + O2 = 4-dehydro-beta-D-glucosyl-[(1-&gt;4)-beta-D-glucosyl]n-1 + [(1-&gt;4)-beta-D-glucosyl]m + acceptor + H2O.. Lytic polysaccharide monooxygenase (LPMO) that depolymerizes crystalline and amorphous polysaccharides via the oxidation of scissile alpha- or beta-(1-4)-glycosidic bonds, yielding C1 or C4 oxidation products. Catalysis by LPMOs requires the reduction of the active-site copper from Cu(II) to Cu(I) by a reducing agent and H(2)O(2) or O(2) as a cosubstrate. This Podospora anserina (strain S / ATCC MYA-4624 / DSM 980 / FGSC 10383) (Pleurage anserina) protein is AA9 family lytic polysaccharide monooxygenase F.